A 376-amino-acid chain; its full sequence is Dihydroorotate dehydrogenase (quinone) (376 aa).

FMN is bound by residues alanine 78 to lysine 82 and threonine 102. Substrate is bound at residue lysine 82. Asparagine 127–phenylalanine 131 serves as a coordination point for substrate. 2 residues coordinate FMN: asparagine 157 and asparagine 190. Asparagine 190 lines the substrate pocket. Catalysis depends on serine 193, which acts as the Nucleophile. Asparagine 195 is a binding site for substrate. The FMN site is built by lysine 228 and threonine 256. Residue asparagine 257–threonine 258 participates in substrate binding. Residues glycine 286, glycine 315, and tyrosine 336 to threonine 337 each bind FMN.

This sequence belongs to the dihydroorotate dehydrogenase family. Type 2 subfamily. In terms of assembly, monomer. The cofactor is FMN.

The protein localises to the cell membrane. The catalysed reaction is (S)-dihydroorotate + a quinone = orotate + a quinol. It participates in pyrimidine metabolism; UMP biosynthesis via de novo pathway; orotate from (S)-dihydroorotate (quinone route): step 1/1. In terms of biological role, catalyzes the conversion of dihydroorotate to orotate with quinone as electron acceptor. The sequence is that of Dihydroorotate dehydrogenase (quinone) from Trichormus variabilis (strain ATCC 29413 / PCC 7937) (Anabaena variabilis).